The primary structure comprises 371 residues: UDP-N-acetylglucosamine--N-acetylmuramyl-(pentapeptide) pyrophosphoryl-undecaprenol N-acetylglucosamine transferase (371 aa).

Residues 10–12 (TGG), N124, R165, S191, I246, and Q291 each bind UDP-N-acetyl-alpha-D-glucosamine.

Belongs to the glycosyltransferase 28 family. MurG subfamily.

It is found in the cell inner membrane. The enzyme catalyses di-trans,octa-cis-undecaprenyl diphospho-N-acetyl-alpha-D-muramoyl-L-alanyl-D-glutamyl-meso-2,6-diaminopimeloyl-D-alanyl-D-alanine + UDP-N-acetyl-alpha-D-glucosamine = di-trans,octa-cis-undecaprenyl diphospho-[N-acetyl-alpha-D-glucosaminyl-(1-&gt;4)]-N-acetyl-alpha-D-muramoyl-L-alanyl-D-glutamyl-meso-2,6-diaminopimeloyl-D-alanyl-D-alanine + UDP + H(+). It participates in cell wall biogenesis; peptidoglycan biosynthesis. Cell wall formation. Catalyzes the transfer of a GlcNAc subunit on undecaprenyl-pyrophosphoryl-MurNAc-pentapeptide (lipid intermediate I) to form undecaprenyl-pyrophosphoryl-MurNAc-(pentapeptide)GlcNAc (lipid intermediate II). The sequence is that of UDP-N-acetylglucosamine--N-acetylmuramyl-(pentapeptide) pyrophosphoryl-undecaprenol N-acetylglucosamine transferase from Geobacter sp. (strain M21).